We begin with the raw amino-acid sequence, 536 residues long: Glutamate--tRNA ligase, mitochondrial (536 aa).

48–50 lines the L-glutamate pocket; sequence RFA. Positions 53–61 match the 'HIGH' region motif; the sequence is PTGFLHLGS. An ATP-binding site is contributed by histidine 58. L-glutamate-binding positions include glutamate 84, 235–239, and arginine 253; that span reads YHLAN. Residues glutamate 256 and 291–295 contribute to the ATP site; that span reads KLSKR. Residues 291 to 295 carry the 'KMSKS' region motif; sequence KLSKR.

It belongs to the class-I aminoacyl-tRNA synthetase family. Glutamate--tRNA ligase type 1 subfamily.

It localises to the mitochondrion matrix. The enzyme catalyses tRNA(Glu) + L-glutamate + ATP = L-glutamyl-tRNA(Glu) + AMP + diphosphate. Its function is as follows. Catalyzes the attachment of glutamate to tRNA(Glu) in a two-step reaction: glutamate is first activated by ATP to form Glu-AMP and then transferred to the acceptor end of tRNA(Glu). The chain is Glutamate--tRNA ligase, mitochondrial (MSE1) from Saccharomyces cerevisiae (strain ATCC 204508 / S288c) (Baker's yeast).